Here is a 495-residue protein sequence, read N- to C-terminus: MSYLLALDQGTTSSRAIIFDEKGQIHATAQRETRIKTPNSGWVEQDANEIWSSQIAVIQQALASAHILAKDIKALGLTNQRETTVVWDKRTGKALAPAIIWQDRRAAQWCNTLIENGMLVQVQQKTGLRIDPYFSAGKLVWLLENIAGFRILAEQGHAAFGTIDSWLVWNLTQGAEHIIEASNASRTMLMNLSTQMWDEDLLNKFNIPAAILPKIISSDAYVADTAQGLLGSTIPITGILGDQQAALFGQSCFEVGSAKNTYGTGCFMLFNTGDQLQFSQNQLLTTLAWQCQNQTRYALEGSVFMAGAIVQWLRDGLGLIQHSAQVEQLASQVQSTEGVVLVPAFTGLGAPHWDSEARALLCGMSRGTTKAHIARAALEAIAFQVSDVLCAMQSDLSRPLKELRVDGGASQNDMLMQFQADILNVPVLRPKMLESTAWGAAAMAGLKAGVFTNLDEIAASWQLDRTFEPKMKNDERESRLCEWSQALKRAKSNLI.

Position 11 (T11) interacts with ADP. Residues T11, T12, and S13 each contribute to the ATP site. T11 provides a ligand contact to sn-glycerol 3-phosphate. An ADP-binding site is contributed by R15. Residues R81, E82, Y133, and D242 each contribute to the sn-glycerol 3-phosphate site. Positions 81, 82, 133, 242, and 243 each coordinate glycerol. T264 and G307 together coordinate ADP. Residues T264, G307, Q311, and G408 each coordinate ATP. Residues G408 and N412 each contribute to the ADP site.

This sequence belongs to the FGGY kinase family.

It carries out the reaction glycerol + ATP = sn-glycerol 3-phosphate + ADP + H(+). It functions in the pathway polyol metabolism; glycerol degradation via glycerol kinase pathway; sn-glycerol 3-phosphate from glycerol: step 1/1. Inhibited by fructose 1,6-bisphosphate (FBP). In terms of biological role, key enzyme in the regulation of glycerol uptake and metabolism. Catalyzes the phosphorylation of glycerol to yield sn-glycerol 3-phosphate. The sequence is that of Glycerol kinase from Acinetobacter baylyi (strain ATCC 33305 / BD413 / ADP1).